Reading from the N-terminus, the 347-residue chain is Protein-glutamate methylesterase/protein-glutamine glutaminase (347 aa).

In terms of domain architecture, Response regulatory spans Arg6–Lys123. Asp57 is subject to 4-aspartylphosphate. The CheB-type methylesterase domain occupies Phe150–Arg342. Catalysis depends on residues Ser162, His188, and Asp284.

Belongs to the CheB family. Post-translationally, phosphorylated by CheA. Phosphorylation of the N-terminal regulatory domain activates the methylesterase activity.

The protein resides in the cytoplasm. It catalyses the reaction [protein]-L-glutamate 5-O-methyl ester + H2O = L-glutamyl-[protein] + methanol + H(+). It carries out the reaction L-glutaminyl-[protein] + H2O = L-glutamyl-[protein] + NH4(+). Functionally, involved in chemotaxis. Part of a chemotaxis signal transduction system that modulates chemotaxis in response to various stimuli. Catalyzes the demethylation of specific methylglutamate residues introduced into the chemoreceptors (methyl-accepting chemotaxis proteins or MCP) by CheR. Also mediates the irreversible deamidation of specific glutamine residues to glutamic acid. The sequence is that of Protein-glutamate methylesterase/protein-glutamine glutaminase from Rhizobium etli (strain ATCC 51251 / DSM 11541 / JCM 21823 / NBRC 15573 / CFN 42).